Reading from the N-terminus, the 201-residue chain is Histone chaperone asf1a-A (201 aa).

It belongs to the ASF1 family. In terms of assembly, interacts with histone H3 (including both histone H3.1 and H3.3) and histone H4. Interacts with hira and p60.

It localises to the nucleus. Functionally, histone chaperone that facilitates histone deposition and histone exchange and removal during nucleosome assembly and disassembly. Not critical for histone deposition during nucleosome assembly. The chain is Histone chaperone asf1a-A (asf1aa) from Xenopus laevis (African clawed frog).